Here is a 213-residue protein sequence, read N- to C-terminus: Thiopurine S-methyltransferase (213 aa).

Positions 10, 45, 66, and 121 each coordinate S-adenosyl-L-methionine.

It belongs to the class I-like SAM-binding methyltransferase superfamily. TPMT family.

The protein localises to the cytoplasm. It carries out the reaction S-adenosyl-L-methionine + a thiopurine = S-adenosyl-L-homocysteine + a thiopurine S-methylether.. The sequence is that of Thiopurine S-methyltransferase from Aliivibrio salmonicida (strain LFI1238) (Vibrio salmonicida (strain LFI1238)).